Here is an 860-residue protein sequence, read N- to C-terminus: Protein argonaute-3 (860 aa).

Position 1 is an N-acetylmethionine (Met1). A PAZ domain is found at Pro230–Ala349. Residues Leu518–Val819 enclose the Piwi domain. The interval Tyr530 to Lys567 is interaction with guide RNA. Residues Asp598, Glu638, and Asp670 each coordinate a divalent metal cation. Positions Gln758–Tyr805 are interaction with guide RNA. His808 contributes to the a divalent metal cation binding site. Ser825 is subject to Phosphoserine.

The protein belongs to the argonaute family. Ago subfamily. Interacts with EIF4B, IMP8, PRMT5 and TNRC6B. Interacts with APOBEC3F, APOBEC3G and APOBEC3H. Interacts with EDC4. In terms of processing, ubiquitinated on surface-exposed lysines by a SCF-like E3 ubiquitin-protein ligase complex containing ZSWIM8 during target-directed microRNA degradation (TDMD), a process that mediates degradation of microRNAs (miRNAs). Ubiquitination by the SCF-like E3 ubiquitin-protein ligase complex containing ZSWIM8 leads to its subsequent degradation, thereby exposing miRNAs for degradation. ZSWIM8 recognizes and binds AGO3 when it is engaged with a TDMD target.

The protein localises to the cytoplasm. Its subcellular location is the P-body. The catalysed reaction is Endonucleolytic cleavage to 5'-phosphomonoester.. Functionally, required for RNA-mediated gene silencing (RNAi). Binds to short RNAs such as microRNAs (miRNAs) and represses the translation of mRNAs which are complementary to them. Proposed to be involved in stabilization of small RNA derivates (siRNA) derived from processed RNA polymerase III-transcribed Alu repeats containing a DR2 retinoic acid response element (RARE) in stem cells and in the subsequent siRNA-dependent degradation of a subset of RNA polymerase II-transcribed coding mRNAs by recruiting a mRNA decapping complex involving EDC4. Possesses RNA slicer activity but only on select RNAs bearing 5'- and 3'-flanking sequences to the region of guide-target complementarity. This chain is Protein argonaute-3 (Ago3), found in Mus musculus (Mouse).